The primary structure comprises 264 residues: Thiazole synthase (264 aa).

Lysine 101 (schiff-base intermediate with DXP) is an active-site residue. 1-deoxy-D-xylulose 5-phosphate is bound by residues glycine 162, alanine 188–glycine 189, and asparagine 210–threonine 211.

This sequence belongs to the ThiG family. Homotetramer. Forms heterodimers with either ThiH or ThiS.

It is found in the cytoplasm. The enzyme catalyses [ThiS sulfur-carrier protein]-C-terminal-Gly-aminoethanethioate + 2-iminoacetate + 1-deoxy-D-xylulose 5-phosphate = [ThiS sulfur-carrier protein]-C-terminal Gly-Gly + 2-[(2R,5Z)-2-carboxy-4-methylthiazol-5(2H)-ylidene]ethyl phosphate + 2 H2O + H(+). It functions in the pathway cofactor biosynthesis; thiamine diphosphate biosynthesis. In terms of biological role, catalyzes the rearrangement of 1-deoxy-D-xylulose 5-phosphate (DXP) to produce the thiazole phosphate moiety of thiamine. Sulfur is provided by the thiocarboxylate moiety of the carrier protein ThiS. In vitro, sulfur can be provided by H(2)S. The polypeptide is Thiazole synthase (Chromobacterium violaceum (strain ATCC 12472 / DSM 30191 / JCM 1249 / CCUG 213 / NBRC 12614 / NCIMB 9131 / NCTC 9757 / MK)).